We begin with the raw amino-acid sequence, 103 residues long: Histone H4 (103 aa).

Residues 1–14 are compositionally biased toward gly residues; it reads MSGRGKGGKGLGKG. The tract at residues 1–20 is disordered; that stretch reads MSGRGKGGKGLGKGGAKRHR. Residues 17–21 mediate DNA binding; it reads KRHRK.

It belongs to the histone H4 family. As to quaternary structure, the nucleosome is a histone octamer containing two molecules each of H2A, H2B, H3 and H4 assembled in one H3-H4 heterotetramer and two H2A-H2B heterodimers. The octamer wraps approximately 147 bp of DNA.

The protein localises to the nucleus. It localises to the chromosome. Its function is as follows. Core component of nucleosome. Nucleosomes wrap and compact DNA into chromatin, limiting DNA accessibility to the cellular machineries which require DNA as a template. Histones thereby play a central role in transcription regulation, DNA repair, DNA replication and chromosomal stability. DNA accessibility is regulated via a complex set of post-translational modifications of histones, also called histone code, and nucleosome remodeling. The sequence is that of Histone H4 (H4-I) from Chlamydomonas reinhardtii (Chlamydomonas smithii).